The sequence spans 124 residues: UPF0225 protein SCO1677 (124 aa).

Belongs to the UPF0225 family.

The sequence is that of UPF0225 protein SCO1677 from Streptomyces coelicolor (strain ATCC BAA-471 / A3(2) / M145).